Reading from the N-terminus, the 496-residue chain is Glutamyl-tRNA(Gln) amidotransferase subunit A (496 aa).

Active-site charge relay system residues include Lys-75 and Ser-150. Ser-174 acts as the Acyl-ester intermediate in catalysis.

It belongs to the amidase family. GatA subfamily. In terms of assembly, heterotrimer of A, B and C subunits.

The enzyme catalyses L-glutamyl-tRNA(Gln) + L-glutamine + ATP + H2O = L-glutaminyl-tRNA(Gln) + L-glutamate + ADP + phosphate + H(+). Allows the formation of correctly charged Gln-tRNA(Gln) through the transamidation of misacylated Glu-tRNA(Gln) in organisms which lack glutaminyl-tRNA synthetase. The reaction takes place in the presence of glutamine and ATP through an activated gamma-phospho-Glu-tRNA(Gln). This chain is Glutamyl-tRNA(Gln) amidotransferase subunit A, found in Burkholderia cenocepacia (strain HI2424).